A 612-amino-acid polypeptide reads, in one-letter code: Putative zinc metalloproteinase C607.06c (612 aa).

His-303 contacts Zn(2+). The active site involves Glu-304. Zn(2+) is bound by residues His-307 and His-313. The Jacalin-type lectin domain maps to 477–612 (VYRSERYGLR…FMDSIGFFIK (136 aa)).

The protein belongs to the peptidase M10B family. Requires Zn(2+) as cofactor.

This is Putative zinc metalloproteinase C607.06c from Schizosaccharomyces pombe (strain 972 / ATCC 24843) (Fission yeast).